The primary structure comprises 169 residues: Transcription antitermination protein NusB (169 aa).

A disordered region spans residues 1 to 20 (MAESSNKPFRGPVRANDRKA).

Belongs to the NusB family.

Functionally, involved in transcription antitermination. Required for transcription of ribosomal RNA (rRNA) genes. Binds specifically to the boxA antiterminator sequence of the ribosomal RNA (rrn) operons. The polypeptide is Transcription antitermination protein NusB (Bradyrhizobium sp. (strain BTAi1 / ATCC BAA-1182)).